The following is a 729-amino-acid chain: Fatty acid oxidation complex subunit alpha (729 aa).

Positions 1–189 are enoyl-CoA hydratase/isomerase; that stretch reads MLYKGDTLYL…KIGLVDGVVK (189 aa). D296 contacts substrate. The 3-hydroxyacyl-CoA dehydrogenase stretch occupies residues 311 to 729; sequence ETPKQAAVLG…ARPVGDLKTA (419 aa). NAD(+) contacts are provided by residues M324, D343, 400 to 402, K407, and S429; that span reads VVE. The For 3-hydroxyacyl-CoA dehydrogenase activity role is filled by H450. NAD(+) is bound at residue N453. Residues N500 and Y660 each coordinate substrate. The interval 708–729 is disordered; that stretch reads RHNEPYYPPVEPARPVGDLKTA.

This sequence in the N-terminal section; belongs to the enoyl-CoA hydratase/isomerase family. In the C-terminal section; belongs to the 3-hydroxyacyl-CoA dehydrogenase family. In terms of assembly, heterotetramer of two alpha chains (FadB) and two beta chains (FadA).

It catalyses the reaction a (3S)-3-hydroxyacyl-CoA + NAD(+) = a 3-oxoacyl-CoA + NADH + H(+). It carries out the reaction a (3S)-3-hydroxyacyl-CoA = a (2E)-enoyl-CoA + H2O. The enzyme catalyses a 4-saturated-(3S)-3-hydroxyacyl-CoA = a (3E)-enoyl-CoA + H2O. The catalysed reaction is (3S)-3-hydroxybutanoyl-CoA = (3R)-3-hydroxybutanoyl-CoA. It catalyses the reaction a (3Z)-enoyl-CoA = a 4-saturated (2E)-enoyl-CoA. It carries out the reaction a (3E)-enoyl-CoA = a 4-saturated (2E)-enoyl-CoA. It functions in the pathway lipid metabolism; fatty acid beta-oxidation. Functionally, involved in the aerobic and anaerobic degradation of long-chain fatty acids via beta-oxidation cycle. Catalyzes the formation of 3-oxoacyl-CoA from enoyl-CoA via L-3-hydroxyacyl-CoA. It can also use D-3-hydroxyacyl-CoA and cis-3-enoyl-CoA as substrate. In Escherichia coli O8 (strain IAI1), this protein is Fatty acid oxidation complex subunit alpha.